We begin with the raw amino-acid sequence, 156 residues long: ATP synthase subunit b (156 aa).

A helical transmembrane segment spans residues 13–33; sequence AFIIFVWCCMKFVWPPLMAAI.

This sequence belongs to the ATPase B chain family. F-type ATPases have 2 components, F(1) - the catalytic core - and F(0) - the membrane proton channel. F(1) has five subunits: alpha(3), beta(3), gamma(1), delta(1), epsilon(1). F(0) has three main subunits: a(1), b(2) and c(10-14). The alpha and beta chains form an alternating ring which encloses part of the gamma chain. F(1) is attached to F(0) by a central stalk formed by the gamma and epsilon chains, while a peripheral stalk is formed by the delta and b chains.

It is found in the cell inner membrane. Functionally, f(1)F(0) ATP synthase produces ATP from ADP in the presence of a proton or sodium gradient. F-type ATPases consist of two structural domains, F(1) containing the extramembraneous catalytic core and F(0) containing the membrane proton channel, linked together by a central stalk and a peripheral stalk. During catalysis, ATP synthesis in the catalytic domain of F(1) is coupled via a rotary mechanism of the central stalk subunits to proton translocation. In terms of biological role, component of the F(0) channel, it forms part of the peripheral stalk, linking F(1) to F(0). In Aeromonas salmonicida (strain A449), this protein is ATP synthase subunit b.